A 364-amino-acid polypeptide reads, in one-letter code: Aminomethyltransferase (364 aa).

The protein belongs to the GcvT family. The glycine cleavage system is composed of four proteins: P, T, L and H.

The enzyme catalyses N(6)-[(R)-S(8)-aminomethyldihydrolipoyl]-L-lysyl-[protein] + (6S)-5,6,7,8-tetrahydrofolate = N(6)-[(R)-dihydrolipoyl]-L-lysyl-[protein] + (6R)-5,10-methylene-5,6,7,8-tetrahydrofolate + NH4(+). In terms of biological role, the glycine cleavage system catalyzes the degradation of glycine. This Shigella dysenteriae serotype 1 (strain Sd197) protein is Aminomethyltransferase.